The chain runs to 100 residues: ATP synthase subunit c (100 aa).

A run of 2 helical transmembrane segments spans residues 26–46 (FSVVAAGIGLGVAALGGAIGM) and 71–91 (MFIALAMIEAQVIYALVIALI).

Belongs to the ATPase C chain family. As to quaternary structure, F-type ATPases have 2 components, F(1) - the catalytic core - and F(0) - the membrane proton channel. F(1) has five subunits: alpha(3), beta(3), gamma(1), delta(1), epsilon(1). F(0) has three main subunits: a(1), b(2) and c(10-14). The alpha and beta chains form an alternating ring which encloses part of the gamma chain. F(1) is attached to F(0) by a central stalk formed by the gamma and epsilon chains, while a peripheral stalk is formed by the delta and b chains.

It localises to the cell inner membrane. Functionally, f(1)F(0) ATP synthase produces ATP from ADP in the presence of a proton or sodium gradient. F-type ATPases consist of two structural domains, F(1) containing the extramembraneous catalytic core and F(0) containing the membrane proton channel, linked together by a central stalk and a peripheral stalk. During catalysis, ATP synthesis in the catalytic domain of F(1) is coupled via a rotary mechanism of the central stalk subunits to proton translocation. Its function is as follows. Key component of the F(0) channel; it plays a direct role in translocation across the membrane. A homomeric c-ring of between 10-14 subunits forms the central stalk rotor element with the F(1) delta and epsilon subunits. This chain is ATP synthase subunit c, found in Campylobacter fetus subsp. fetus (strain 82-40).